A 64-amino-acid polypeptide reads, in one-letter code: MLYELVAYGIAQGTAEKVVSLINAGLTVGSIISILGGVTVGLSGVFTAVKAAIAKQGIKKAIQL.

Residues 1 to 4 constitute a propeptide that is removed on maturation; sequence MLYE. The segment at residues 5–64 is a cross-link (cyclopeptide (Leu-Leu)); the sequence is LVAYGIAQGTAEKVVSLINAGLTVGSIISILGGVTVGLSGVFTAVKAAIAKQGIKKAIQL.

The protein resides in the secreted. In terms of biological role, cyclopeptide antibiotic that inhibits the growth of Gram-positive bacteria, but has no effect on the growth of Gram-negative bacteria. This Carnobacterium maltaromaticum (Carnobacterium piscicola) protein is Carnocyclin-A.